The following is a 189-amino-acid chain: Probable UbiX-like flavin prenyltransferase (189 aa).

Residues 9–11 (GAS), S36, 87–90 (SMKT), and R122 each bind FMN.

Belongs to the UbiX/PAD1 family. YclB subfamily. As to quaternary structure, homododecamer.

It carries out the reaction dimethylallyl phosphate + FMNH2 = prenylated FMNH2 + phosphate. Functionally, involved in the non-oxidative decarboxylation and detoxification of phenolic derivatives under anaerobic conditions. Flavin prenyltransferase that catalyzes the synthesis of the prenylated FMN cofactor (prenyl-FMN) for phenolic acid decarboxylase. The sequence is that of Probable UbiX-like flavin prenyltransferase from Sedimentibacter hydroxybenzoicus (Clostridium hydroxybenzoicum).